The sequence spans 165 residues: PTS system glucose-specific EIIA component (165 aa).

The region spanning 33 to 137 (DPVFAGRMMG…STITPIVITN (105 aa)) is the PTS EIIA type-1 domain. Residues H70 and H85 each coordinate Zn(2+). Residue H85 is the Tele-phosphohistidine intermediate; for EIIA activity of the active site. H85 carries the phosphohistidine; by HPr modification.

Heterodimer with glycerol kinase (glpk). The cofactor is Zn(2+).

The protein localises to the cytoplasm. The phosphoenolpyruvate-dependent sugar phosphotransferase system (sugar PTS), a major carbohydrate active transport system, catalyzes the phosphorylation of incoming sugar substrates concomitantly with their translocation across the cell membrane. The enzyme II complex composed of PtsG and Crr is involved in glucose transport. The sequence is that of PTS system glucose-specific EIIA component (crr) from Bacillus cereus (strain ATCC 14579 / DSM 31 / CCUG 7414 / JCM 2152 / NBRC 15305 / NCIMB 9373 / NCTC 2599 / NRRL B-3711).